Reading from the N-terminus, the 371-residue chain is uncharacterized protein (371 aa).

Solcar repeat units lie at residues 3–98, 131–276, and 284–369; these read DDSL…CKVL, RYWG…FKSF, and KSNF…VRKW. 6 consecutive transmembrane segments (helical) span residues 9-29, 73-93, 137-157, 253-273, 290-310, and 341-362; these read AIAGGAAGLASSLVVAPLDVV, GVGPMMLGYLPSWSIYFVVYE, IFSAVIAGAASVTLTNPIWVV, LFPSLFGTLHVGIQFPLYEYF, VLAATLSKIAASTVTYPHEVL, and YYSGMATNFIRTIPASSVTFLS.

Belongs to the mitochondrial carrier (TC 2.A.29) family.

It localises to the mitochondrion inner membrane. This is an uncharacterized protein from Schizosaccharomyces pombe (strain 972 / ATCC 24843) (Fission yeast).